Here is a 398-residue protein sequence, read N- to C-terminus: MSKTIAVNAGSSTVKFKLFDMPSEEVVAEGNIERIGMDMGHAKIKYGDGQVSEEEKPFPNHGTAVSYLLDQLINLGIVKEYHEITAVGHRIVAGGEFFKDSVVIDDDVMQKIDELAEYAPLHNPAELQGIKAFKRVLPDAFAVAVFDTSFHSNMPEMNALYSVPYEWYEKYGARKYGAHGTSHRYVASRAAEMLGKPLEDLKLITCHIGAGASITAIKNGKSFDTSMGFSPLAGVTMATRSGDVDPSLVAFVQSKLGISSEEMIELLNHKSGLLGLSELSADMRDVQAAAEHGNKQCELALEIYENRVLKYIGSYLAELGGADAIVFTAGVGENDKEFRQAIGDKLAYFGVKVDPEKNDVRGEERDVSADDAKIKVLLIPTNEELMIVHDIERLRKQA.

Asn8 is a Mg(2+) binding site. Residue Lys15 coordinates ATP. Arg90 provides a ligand contact to substrate. Asp147 acts as the Proton donor/acceptor in catalysis. Residues 207 to 211, 282 to 284, and 330 to 334 contribute to the ATP site; these read HIGAG, DMR, and GVGEN. Glu383 serves as a coordination point for Mg(2+).

Belongs to the acetokinase family. Homodimer. Mg(2+) is required as a cofactor. It depends on Mn(2+) as a cofactor.

Its subcellular location is the cytoplasm. The catalysed reaction is acetate + ATP = acetyl phosphate + ADP. It participates in metabolic intermediate biosynthesis; acetyl-CoA biosynthesis; acetyl-CoA from acetate: step 1/2. Its function is as follows. Catalyzes the formation of acetyl phosphate from acetate and ATP. Can also catalyze the reverse reaction. The polypeptide is Acetate kinase (Limosilactobacillus fermentum (strain NBRC 3956 / LMG 18251) (Lactobacillus fermentum)).